The primary structure comprises 124 residues: Protein MGF 110-4L (124 aa).

The first 18 residues, 1 to 18 (MLVIFLGILGLLANQVLG), serve as a signal peptide directing secretion. Asn64 carries an N-linked (GlcNAc...) asparagine; by host glycan. The Prevents secretion from ER signature appears at 121–124 (KEDL).

The protein belongs to the asfivirus MGF 110 family.

Its subcellular location is the virion. It is found in the host endoplasmic reticulum-Golgi intermediate compartment. Its function is as follows. Causes the redistribution of lumenal ER protein to an enlarged ERGIC compartment. The protein is Protein MGF 110-4L of Ornithodoros (relapsing fever ticks).